The sequence spans 319 residues: Acetyl esterase (319 aa).

Residues H91 to G93 carry the Involved in the stabilization of the negatively charged intermediate by the formation of the oxyanion hole motif. Active-site residues include S165, D262, and H292.

It belongs to the 'GDXG' lipolytic enzyme family. As to quaternary structure, homodimer. Interacts with MalT and MelA.

It is found in the cytoplasm. In terms of biological role, displays esterase activity towards short chain fatty esters (acyl chain length of up to 8 carbons). Able to hydrolyze triacetylglycerol (triacetin) and tributyrylglycerol (tributyrin), but not trioleylglycerol (triolein) or cholesterol oleate. Negatively regulates MalT activity by antagonizing maltotriose binding. Inhibits MelA galactosidase activity. The polypeptide is Acetyl esterase (Escherichia coli O81 (strain ED1a)).